The primary structure comprises 145 residues: Transcriptional regulator MraZ (145 aa).

SpoVT-AbrB domains lie at 5-49 and 78-121; these read TYNH…LESE and TYKI…AKEV.

Belongs to the MraZ family. Forms oligomers.

It is found in the cytoplasm. The protein localises to the nucleoid. The polypeptide is Transcriptional regulator MraZ (Ureaplasma parvum serovar 3 (strain ATCC 27815 / 27 / NCTC 11736)).